Here is a 310-residue protein sequence, read N- to C-terminus: Homoserine kinase (310 aa).

ATP is bound at residue P91 to C101.

It belongs to the GHMP kinase family. Homoserine kinase subfamily.

The protein localises to the cytoplasm. It catalyses the reaction L-homoserine + ATP = O-phospho-L-homoserine + ADP + H(+). The protein operates within amino-acid biosynthesis; L-threonine biosynthesis; L-threonine from L-aspartate: step 4/5. Functionally, catalyzes the ATP-dependent phosphorylation of L-homoserine to L-homoserine phosphate. The protein is Homoserine kinase of Sodalis glossinidius (strain morsitans).